Consider the following 349-residue polypeptide: DNA polymerase IV (349 aa).

The 182-residue stretch at 7–188 folds into the UmuC domain; sequence IIHIDMDYFF…LPVKKLFGVG (182 aa). 2 residues coordinate Mg(2+): aspartate 11 and aspartate 106. Glutamate 107 is an active-site residue.

It belongs to the DNA polymerase type-Y family. In terms of assembly, monomer. Mg(2+) is required as a cofactor.

It is found in the cytoplasm. It carries out the reaction DNA(n) + a 2'-deoxyribonucleoside 5'-triphosphate = DNA(n+1) + diphosphate. In terms of biological role, poorly processive, error-prone DNA polymerase involved in untargeted mutagenesis. Copies undamaged DNA at stalled replication forks, which arise in vivo from mismatched or misaligned primer ends. These misaligned primers can be extended by PolIV. Exhibits no 3'-5' exonuclease (proofreading) activity. May be involved in translesional synthesis, in conjunction with the beta clamp from PolIII. The polypeptide is DNA polymerase IV (Francisella tularensis subsp. holarctica (strain FTNF002-00 / FTA)).